A 429-amino-acid polypeptide reads, in one-letter code: C4-dicarboxylate transport protein (429 aa).

A run of 8 helical transmembrane segments spans residues 3 to 23 (VSIF…GVLL), 44 to 64 (LIKM…IAGM), 76 to 96 (IALL…LVVV), 144 to 164 (AFAS…GFAL), 184 to 204 (VIFG…FGAM), 222 to 242 (LILC…GTIA), 331 to 351 (TLLV…GSGF), and 352 to 372 (IVLA…LALI).

The protein belongs to the dicarboxylate/amino acid:cation symporter (DAACS) (TC 2.A.23) family.

It is found in the cell inner membrane. Its function is as follows. Responsible for the transport of dicarboxylates such as succinate, fumarate, and malate from the periplasm across the membrane. This chain is C4-dicarboxylate transport protein, found in Yersinia pestis bv. Antiqua (strain Antiqua).